We begin with the raw amino-acid sequence, 156 residues long: ATP synthase subunit b (156 aa).

The helical transmembrane segment at 11-31 threads the bilayer; the sequence is AIAFVLFVLFCMKYVWPPLMA.

The protein belongs to the ATPase B chain family. In terms of assembly, F-type ATPases have 2 components, F(1) - the catalytic core - and F(0) - the membrane proton channel. F(1) has five subunits: alpha(3), beta(3), gamma(1), delta(1), epsilon(1). F(0) has three main subunits: a(1), b(2) and c(10-14). The alpha and beta chains form an alternating ring which encloses part of the gamma chain. F(1) is attached to F(0) by a central stalk formed by the gamma and epsilon chains, while a peripheral stalk is formed by the delta and b chains.

It localises to the cell inner membrane. Its function is as follows. F(1)F(0) ATP synthase produces ATP from ADP in the presence of a proton or sodium gradient. F-type ATPases consist of two structural domains, F(1) containing the extramembraneous catalytic core and F(0) containing the membrane proton channel, linked together by a central stalk and a peripheral stalk. During catalysis, ATP synthesis in the catalytic domain of F(1) is coupled via a rotary mechanism of the central stalk subunits to proton translocation. Functionally, component of the F(0) channel, it forms part of the peripheral stalk, linking F(1) to F(0). The polypeptide is ATP synthase subunit b (Shigella boydii serotype 18 (strain CDC 3083-94 / BS512)).